The primary structure comprises 532 residues: Transcriptional regulatory protein RtcR (532 aa).

One can recognise a Sigma-54 factor interaction domain in the interval 186–424 (IATRNPHFNR…LSASVTRMAT (239 aa)). Residues 215 to 222 (GPTGAGKS) and 281 to 290 (ANGGMLFLDE) each bind ATP. A DNA-binding region (H-T-H motif) is located at residues 485–504 (KSLSAAGRQLFDVSRQGKAS).

Transcriptional repressor of the rtcAB genes. Interacts with sigma-54. The sequence is that of Transcriptional regulatory protein RtcR (rtcR) from Escherichia coli (strain K12).